The chain runs to 229 residues: MPNIKRYFLEKSIVKVKIDEYLAKQYYNAEYAGVEVLKTPIGTRVIIYAGRPSMIIGRGGRNIKQLAQIFEKVFGLENPQITITNVENPELNARVMAFRLAIALEKGYHFRRAAFISMRRIMNAGALGAEIIISGKLTTERARYEKLKEGIVYKSGQQLEKMIDRAIAIAMLKPGIFGVEVVITKPLKIEDKINLKESPSVPQEVSVTNVTFIEESSQKSEEKSEGEKE.

One can recognise a KH type-2 domain in the interval Ile18–Glu87.

This sequence belongs to the universal ribosomal protein uS3 family. In terms of assembly, part of the 30S ribosomal subunit.

In terms of biological role, binds the lower part of the 30S subunit head. The polypeptide is Small ribosomal subunit protein uS3 (Saccharolobus solfataricus (strain ATCC 35092 / DSM 1617 / JCM 11322 / P2) (Sulfolobus solfataricus)).